The primary structure comprises 99 residues: Integration host factor subunit alpha (99 aa).

The protein belongs to the bacterial histone-like protein family. Heterodimer of an alpha and a beta chain.

Functionally, this protein is one of the two subunits of integration host factor, a specific DNA-binding protein that functions in genetic recombination as well as in transcriptional and translational control. The protein is Integration host factor subunit alpha of Pseudoalteromonas translucida (strain TAC 125).